Here is a 205-residue protein sequence, read N- to C-terminus: Guanylate kinase (205 aa).

In terms of domain architecture, Guanylate kinase-like spans 3–181; the sequence is GSLYIISAPS…ALSELHSIFL (179 aa). 10 to 17 is a binding site for ATP; it reads APSGAGKT.

Belongs to the guanylate kinase family.

It is found in the cytoplasm. It carries out the reaction GMP + ATP = GDP + ADP. Its function is as follows. Essential for recycling GMP and indirectly, cGMP. This chain is Guanylate kinase, found in Hydrogenovibrio crunogenus (strain DSM 25203 / XCL-2) (Thiomicrospira crunogena).